A 238-amino-acid chain; its full sequence is Ion-translocating oxidoreductase complex subunit E (238 aa).

5 helical membrane passes run 41–61, 71–91, 95–115, 130–150, and 184–204; these read LGLGLATMLVLACSNAAVSLV, LPAFVMIIAALTTCIELLMQA, ELYQVLGIFIPLITTNCVILG, SFDGLLMGLGFALVLLVLGGL, and GFLLAILPPGAFIMLGLLIAL.

The protein belongs to the NqrDE/RnfAE family. The complex is composed of six subunits: RnfA, RnfB, RnfC, RnfD, RnfE and RnfG.

It localises to the cell inner membrane. Part of a membrane-bound complex that couples electron transfer with translocation of ions across the membrane. This is Ion-translocating oxidoreductase complex subunit E from Pseudomonas aeruginosa (strain UCBPP-PA14).